The following is a 407-amino-acid chain: 5-aminolevulinate synthase 2 (407 aa).

Residues R21 and S137 each contribute to the substrate site. Pyridoxal 5'-phosphate is bound by residues S189, H217, and T245. Residue K248 is part of the active site. K248 is modified (N6-(pyridoxal phosphate)lysine). The pyridoxal 5'-phosphate site is built by T277 and T278. T363 serves as a coordination point for substrate.

The protein belongs to the class-II pyridoxal-phosphate-dependent aminotransferase family. In terms of assembly, homodimer. It depends on pyridoxal 5'-phosphate as a cofactor.

The catalysed reaction is succinyl-CoA + glycine + H(+) = 5-aminolevulinate + CO2 + CoA. It participates in porphyrin-containing compound metabolism; protoporphyrin-IX biosynthesis; 5-aminolevulinate from glycine: step 1/1. In Cereibacter sphaeroides (strain ATCC 17023 / DSM 158 / JCM 6121 / CCUG 31486 / LMG 2827 / NBRC 12203 / NCIMB 8253 / ATH 2.4.1.) (Rhodobacter sphaeroides), this protein is 5-aminolevulinate synthase 2 (hemT).